Consider the following 707-residue polypeptide: Solute carrier family 15 member 1 (707 aa).

A helical transmembrane segment spans residues 1–21 (MGMSKSLSCFGYPLSIFFIVV). Over 22–53 (NEFCERFSYYGMRALLILYFRNFIGWDDNLST) the chain is Extracellular. Asparagine 50 carries an N-linked (GlcNAc...) asparagine glycan. A helical transmembrane segment spans residues 54-74 (VIYHTFVALCYLTPILGALIA). Over 75 to 82 (DAWLGKFK) the chain is Cytoplasmic. Residues 83–103 (TIVWLSIVYTIGQAVTSLSSV) form a helical membrane-spanning segment. Topologically, residues 104–118 (NELTDNNHDGTPDSL) are extracellular. The chain crosses the membrane as a helical span at residues 119–139 (PVHVAVCMIGLLLIALGTGGI). Residues 140–161 (KPCVSAFGGDQFEEGQEKQRNR) lie on the Cytoplasmic side of the membrane. Residues 162 to 182 (FFSIFYLAINAGSLLSTIITP) traverse the membrane as a helical segment. The Extracellular portion of the chain corresponds to 183–198 (MVRVQQCGIHVKQACY). The helical transmembrane segment at 199-219 (PLAFGIPAILMAVSLIVFIIG) threads the bilayer. The Cytoplasmic segment spans residues 220–276 (SGMYKKFKPQGNILSKVVKCICFAIKNRFRHRSKQFPKRAHWLDWAKEKYDERLIAQ). Residues 277–297 (IKMVTRVLFLYIPLPMFWALF) form a helical membrane-spanning segment. The Extracellular portion of the chain corresponds to 298 to 327 (DQQGSRWTLQATTMSGRIGILEIQPDQMQT). The chain crosses the membrane as a helical span at residues 328-348 (VNTILIIILVPIMDAVVYPLI). Topologically, residues 349–361 (AKCGLNFTSLKKM) are cytoplasmic. Residues 362-382 (TIGMFLASMAFVAAAILQVEI) traverse the membrane as a helical segment. Residues 383 to 583 (DKTLPVFPKA…PPNTMNMAWQ (201 aa)) are Extracellular-facing. Residues 383-583 (DKTLPVFPKA…PPNTMNMAWQ (201 aa)) are extracellular domain (ECD). Asparagine 439, asparagine 498, and asparagine 513 each carry an N-linked (GlcNAc...) asparagine glycan. The chain crosses the membrane as a helical span at residues 584–604 (IPQYFLITSGEVVFSITGLEF). The Cytoplasmic portion of the chain corresponds to 605–618 (SYSQAPSNMKSVLQ). Residues 619-639 (AGWLLTVAVGNIIVLIVAGAG) form a helical membrane-spanning segment. Residues 640-644 (QINKQ) are Extracellular-facing. The chain crosses the membrane as a helical span at residues 645 to 665 (WAEYILFAALLLVVCVIFAIM). The Cytoplasmic segment spans residues 666–707 (ARFYTYVNPAEIEAQFEEDEKKKNPEKNDLYPSLAPVSQTQM). The segment at 682–707 (EEDEKKKNPEKNDLYPSLAPVSQTQM) is disordered. The span at 684–694 (DEKKKNPEKND) shows a compositional bias: basic and acidic residues.

This sequence belongs to the major facilitator superfamily. Proton-dependent oligopeptide transporter (POT/PTR) (TC 2.A.17) family. In terms of assembly, interacts (via extracellular domain region) with trypsin. As to expression, intestine, kidney, liver and low in brain.

The protein localises to the apical cell membrane. The catalysed reaction is a dipeptide(out) + H(+)(out) = a dipeptide(in) + H(+)(in). It catalyses the reaction an L-amino acid tripeptide(out) + H(+)(out) = an L-amino acid tripeptide(in) + H(+)(in). It carries out the reaction L-alanyl-L-lysine(out) + H(+)(out) = L-alanyl-L-lysine(in) + H(+)(in). The enzyme catalyses L-alanyl-L-proline(out) + H(+)(out) = L-alanyl-L-proline(in) + H(+)(in). The catalysed reaction is L-alanyl-L-valine(out) + H(+)(out) = L-alanyl-L-valine(in) + H(+)(in). It catalyses the reaction carnosine(out) + H(+)(out) = carnosine(in) + H(+)(in). It carries out the reaction glycyl-L-glutamine(out) + H(+)(out) = glycyl-L-glutamine(in) + H(+)(in). The enzyme catalyses glycyl-L-leucine(out) + H(+)(out) = glycyl-L-leucine(in) + H(+)(in). The catalysed reaction is glycyl-L-proline(out) + H(+)(out) = glycyl-L-proline(in) + H(+)(in). It catalyses the reaction glycyl-sarcosine(out) + H(+)(out) = glycyl-sarcosine(in) + H(+)(in). It carries out the reaction L-leucyl-L-leucine(out) + H(+)(out) = L-leucyl-L-leucine(in) + H(+)(in). The enzyme catalyses L-leucyl-L-proline(out) + H(+)(out) = L-leucyl-L-proline(in) + H(+)(in). The catalysed reaction is L-phenylalanyl-L-leucine(out) + H(+)(out) = L-phenylalanyl-L-leucine(in) + H(+)(in). It catalyses the reaction L-phenylalanyl-L-phenylalanine(out) + H(+)(out) = L-phenylalanyl-L-phenylalanine(in) + H(+)(in). It carries out the reaction L-lysyl-glycine(out) + H(+)(out) = L-lysyl-glycine(in) + H(+)(in). The enzyme catalyses L-tyrosylglycine(out) + H(+)(out) = L-tyrosylglycine(in) + H(+)(in). The catalysed reaction is L-alanyl-L-aspartate(out) + 2 H(+)(out) = L-alanyl-L-aspartate(in) + 2 H(+)(in). It catalyses the reaction L-aspartyl-glycine(out) + 2 H(+)(out) = L-aspartyl-glycine(in) + 2 H(+)(in). It carries out the reaction glycyl-L-aspartate(out) + 2 H(+)(out) = glycyl-L-aspartate(in) + 2 H(+)(in). The enzyme catalyses glycyl-L-glutamate(out) + 2 H(+)(out) = glycyl-L-glutamate(in) + 2 H(+)(in). The catalysed reaction is L-alanyl-L-leucyl-L-alanine(out) + H(+)(out) = L-alanyl-L-leucyl-L-alanine(in) + H(+)(in). It catalyses the reaction L-alanyl-L-prolylglycine(out) + H(+)(out) = L-alanyl-L-prolylglycine(in) + H(+)(in). It carries out the reaction glycylglycyl-L-isoleucine(out) + H(+)(out) = glycylglycyl-L-isoleucine(in) + H(+)(in). The enzyme catalyses glycylglycyl-L-proline(out) + H(+)(out) = glycylglycyl-L-proline(in) + H(+)(in). The catalysed reaction is L-methionyl-L-phenylalanyl-L-methionine(out) + H(+)(out) = L-methionyl-L-phenylalanyl-L-methionine(in) + H(+)(in). It catalyses the reaction N-acetyl-D-muramoyl-L-alanyl-D-isoglutamine(out) + 2 H(+)(out) = N-acetyl-D-muramoyl-L-alanyl-D-isoglutamine(in) + 2 H(+)(in). It carries out the reaction N(alpha)-formyl-L-methionyl-L-leucyl-L-phenylalanine(out) + 2 H(+)(out) = N(alpha)-formyl-L-methionyl-L-leucyl-L-phenylalanine(in) + 2 H(+)(in). In terms of biological role, electrogenic proton-coupled amino-acid transporter that transports oligopeptides of 2 to 4 amino acids with a preference for dipeptides. Transports neutral and monovalently charged peptides with a proton to peptide stoichiometry of 1:1 or 2:1. Primarily responsible for the absorption of dietary di- and tripeptides from the small intestinal lumen. Mediates transepithelial transport of muramyl and N-formylated bacterial dipeptides contributing to recognition of pathogenic bacteria by the mucosal immune system. This chain is Solute carrier family 15 member 1 (SLC15A1), found in Oryctolagus cuniculus (Rabbit).